The chain runs to 310 residues: Glutamyl-Q tRNA(Asp) synthetase (310 aa).

Residues 24 to 28 (RFAPS) and Glu60 contribute to the L-glutamate site. The 'HIGH' region motif lies at 27-37 (PSPSGPLHFGS). Cys116, Cys118, Tyr130, and Cys134 together coordinate Zn(2+). L-glutamate-binding residues include Tyr187 and Arg205. The 'KMSKS' region signature appears at 243–247 (KLSKQ). Lys246 serves as a coordination point for ATP.

This sequence belongs to the class-I aminoacyl-tRNA synthetase family. GluQ subfamily. Zn(2+) serves as cofactor.

Functionally, catalyzes the tRNA-independent activation of glutamate in presence of ATP and the subsequent transfer of glutamate onto a tRNA(Asp). Glutamate is transferred on the 2-amino-5-(4,5-dihydroxy-2-cyclopenten-1-yl) moiety of the queuosine in the wobble position of the QUC anticodon. In Photobacterium profundum (strain SS9), this protein is Glutamyl-Q tRNA(Asp) synthetase.